A 338-amino-acid polypeptide reads, in one-letter code: Phosphonates-binding periplasmic protein (338 aa).

The first 26 residues, 1-26, serve as a signal peptide directing secretion; that stretch reads MNAKIIASLAFTSMFSLSTLLSPAHA.

Belongs to the phosphate/phosphite/phosphonate binding protein family. The complex is composed of two ATP-binding proteins (PhnC), two transmembrane proteins (PhnE) and a solute-binding protein (PhnD).

The protein resides in the periplasm. Phosphonate binding protein that is part of the phosphonate uptake system. Exhibits high affinity for 2-aminoethylphosphonate, and somewhat less affinity to ethylphosphonate, methylphosphonate, phosphonoacetate and phenylphosphonate. The polypeptide is Phosphonates-binding periplasmic protein (phnD) (Escherichia coli (strain K12)).